The chain runs to 268 residues: Regulation of nuclear pre-mRNA domain-containing protein 1A (268 aa).

One can recognise a CID domain in the interval 1-133 (MSAFSEAALE…QLRQALYGDR (133 aa)).

This sequence belongs to the UPF0400 (RTT103) family. As to quaternary structure, may form a heterodimer with RPRD1B. Associates with the RNA polymerase II subunit POLR2A (via CTD phosphorylated at 'Ser-2' and 'Ser-7' of the heptad repeats).

It localises to the nucleus. Interacts with phosphorylated C-terminal heptapeptide repeat domain (CTD) of the largest RNA polymerase II subunit POLR2A, and participates in dephosphorylation of the CTD by RPAP2. May act as a negative regulator of cyclin-D1 (CCND1) and cyclin-E (CCNE1) in the cell cycle. This chain is Regulation of nuclear pre-mRNA domain-containing protein 1A (RPRD1A), found in Gallus gallus (Chicken).